Here is a 382-residue protein sequence, read N- to C-terminus: Succinate--CoA ligase [ADP-forming] subunit beta 1 (382 aa).

Residues 9-235 (KQIFAKHGIR…ATEEDPLERE (227 aa)) enclose the ATP-grasp domain. ATP is bound by residues K45, 52–54 (GRG), E91, L94, and E99. The Mg(2+) site is built by N191 and D204. Position 255 (N255) interacts with substrate.

Belongs to the succinate/malate CoA ligase beta subunit family. Heterotetramer of two alpha and two beta subunits. Mg(2+) serves as cofactor.

The enzyme catalyses succinate + ATP + CoA = succinyl-CoA + ADP + phosphate. It catalyses the reaction GTP + succinate + CoA = succinyl-CoA + GDP + phosphate. It participates in carbohydrate metabolism; tricarboxylic acid cycle; succinate from succinyl-CoA (ligase route): step 1/1. Functionally, succinyl-CoA synthetase functions in the citric acid cycle (TCA), coupling the hydrolysis of succinyl-CoA to the synthesis of either ATP or GTP and thus represents the only step of substrate-level phosphorylation in the TCA. The beta subunit provides nucleotide specificity of the enzyme and binds the substrate succinate, while the binding sites for coenzyme A and phosphate are found in the alpha subunit. This is Succinate--CoA ligase [ADP-forming] subunit beta 1 from Archaeoglobus fulgidus (strain ATCC 49558 / DSM 4304 / JCM 9628 / NBRC 100126 / VC-16).